Here is a 152-residue protein sequence, read N- to C-terminus: Ribonuclease HI (152 aa).

Residues 1–142 (MDSKVVIYTD…ADKLAVQGRE (142 aa)) form the RNase H type-1 domain. Mg(2+)-binding residues include Asp-10, Glu-48, Asp-70, and Asp-134.

The protein belongs to the RNase H family. Monomer. Mg(2+) is required as a cofactor.

It localises to the cytoplasm. It catalyses the reaction Endonucleolytic cleavage to 5'-phosphomonoester.. Its function is as follows. Endonuclease that specifically degrades the RNA of RNA-DNA hybrids. This Rickettsia conorii (strain ATCC VR-613 / Malish 7) protein is Ribonuclease HI.